A 574-amino-acid polypeptide reads, in one-letter code: Thiol:disulfide interchange protein DsbD (574 aa).

The first 19 residues, 1-19 (MAHRILTLILLFCSAHASA), serve as a signal peptide directing secretion. Cysteines 122 and 128 form a disulfide. Residues 147-169 (VKANAATPSAATGEQTRVNSDSP) form a disordered region. The segment covering 152–169 (ATPSAATGEQTRVNSDSP) has biased composition (polar residues). 7 helical membrane-spanning segments follow: residues 173–193 (LPFS…TPCV), 218–238 (LLAF…GLVV), 253–273 (WVLV…FGLF), 306–326 (IAGL…LLYI), 333–353 (WLGG…LILV), 367–387 (WMEQ…VFLL), and 399–419 (LWSV…LNAT). C192 and C314 are disulfide-bonded. In terms of domain architecture, Thioredoxin spans 430 to 574 (LLGAAMICAR…FATHLHNRLR (145 aa)). Residues C489 and C492 are joined by a disulfide bond.

The protein belongs to the thioredoxin family. DsbD subfamily.

It is found in the cell inner membrane. The enzyme catalyses [protein]-dithiol + NAD(+) = [protein]-disulfide + NADH + H(+). It carries out the reaction [protein]-dithiol + NADP(+) = [protein]-disulfide + NADPH + H(+). Its function is as follows. Required to facilitate the formation of correct disulfide bonds in some periplasmic proteins and for the assembly of the periplasmic c-type cytochromes. Acts by transferring electrons from cytoplasmic thioredoxin to the periplasm. This transfer involves a cascade of disulfide bond formation and reduction steps. The polypeptide is Thiol:disulfide interchange protein DsbD (Cronobacter sakazakii (strain ATCC BAA-894) (Enterobacter sakazakii)).